The following is a 64-amino-acid chain: Large ribosomal subunit protein uL29 (64 aa).

This sequence belongs to the universal ribosomal protein uL29 family.

This Psychrobacter sp. (strain PRwf-1) protein is Large ribosomal subunit protein uL29.